The sequence spans 316 residues: Aspartate carbamoyltransferase catalytic subunit (316 aa).

Residues Arg58 and Thr59 each contribute to the carbamoyl phosphate site. Lys86 lines the L-aspartate pocket. Residues Arg108, His136, and Gln139 each coordinate carbamoyl phosphate. L-aspartate contacts are provided by Arg169 and Arg223. Carbamoyl phosphate-binding residues include Gly264 and Pro265.

It belongs to the aspartate/ornithine carbamoyltransferase superfamily. ATCase family. In terms of assembly, heterododecamer (2C3:3R2) of six catalytic PyrB chains organized as two trimers (C3), and six regulatory PyrI chains organized as three dimers (R2).

The enzyme catalyses carbamoyl phosphate + L-aspartate = N-carbamoyl-L-aspartate + phosphate + H(+). The protein operates within pyrimidine metabolism; UMP biosynthesis via de novo pathway; (S)-dihydroorotate from bicarbonate: step 2/3. Its function is as follows. Catalyzes the condensation of carbamoyl phosphate and aspartate to form carbamoyl aspartate and inorganic phosphate, the committed step in the de novo pyrimidine nucleotide biosynthesis pathway. The sequence is that of Aspartate carbamoyltransferase catalytic subunit from Granulibacter bethesdensis (strain ATCC BAA-1260 / CGDNIH1).